The chain runs to 415 residues: Adipocyte plasma membrane-associated protein (415 aa).

The tract at residues 1–30 (MNEAEGLRQRRPLRPQVITEDSPAQEAKEG) is disordered. Topologically, residues 1–39 (MNEAEGLRQRRPLRPQVITEDSPAQEAKEGSAYSSKVFR) are cytoplasmic. The chain crosses the membrane as a helical span at residues 40–60 (VTFLTLAASLAVPLLGATVLL). The Extracellular portion of the chain corresponds to 61 to 412 (DCPIDPQPIS…RSPFICRLNL (352 aa)). A glycan (N-linked (GlcNAc...) asparagine) is linked at Asn-159.

The protein belongs to the strictosidine synthase family.

Its subcellular location is the membrane. The sequence is that of Adipocyte plasma membrane-associated protein (APMAP) from Gallus gallus (Chicken).